The following is a 188-amino-acid chain: Elongation factor P (188 aa).

This sequence belongs to the elongation factor P family.

The protein resides in the cytoplasm. The protein operates within protein biosynthesis; polypeptide chain elongation. In terms of biological role, involved in peptide bond synthesis. Stimulates efficient translation and peptide-bond synthesis on native or reconstituted 70S ribosomes in vitro. Probably functions indirectly by altering the affinity of the ribosome for aminoacyl-tRNA, thus increasing their reactivity as acceptors for peptidyl transferase. The protein is Elongation factor P of Rickettsia africae (strain ESF-5).